The chain runs to 146 residues: MGEVRRPDRVAEAIREEVATFLSEGAKDPRIRAFVTVTAVEVTRDLRHATVFVSLMGDDADKKSTTAGLASVASHLRSQLGKSLRLRSAPEIHFRTDESVARASRIEHLLAKIRDEREAQEPAQDPAQDSSQDASVEASDAPDKAE.

A disordered region spans residues 113–146 (IRDEREAQEPAQDPAQDSSQDASVEASDAPDKAE).

The protein belongs to the RbfA family. Monomer. Binds 30S ribosomal subunits, but not 50S ribosomal subunits or 70S ribosomes.

The protein localises to the cytoplasm. In terms of biological role, one of several proteins that assist in the late maturation steps of the functional core of the 30S ribosomal subunit. Associates with free 30S ribosomal subunits (but not with 30S subunits that are part of 70S ribosomes or polysomes). Required for efficient processing of 16S rRNA. May interact with the 5'-terminal helix region of 16S rRNA. This is Ribosome-binding factor A from Gemmatimonas aurantiaca (strain DSM 14586 / JCM 11422 / NBRC 100505 / T-27).